The chain runs to 476 residues: ATP synthase subunit beta (476 aa).

162 to 169 provides a ligand contact to ATP; sequence GGAGVGKT.

The protein belongs to the ATPase alpha/beta chains family. As to quaternary structure, F-type ATPases have 2 components, CF(1) - the catalytic core - and CF(0) - the membrane proton channel. CF(1) has five subunits: alpha(3), beta(3), gamma(1), delta(1), epsilon(1). CF(0) has three main subunits: a(1), b(2) and c(9-12). The alpha and beta chains form an alternating ring which encloses part of the gamma chain. CF(1) is attached to CF(0) by a central stalk formed by the gamma and epsilon chains, while a peripheral stalk is formed by the delta and b chains.

The protein localises to the cell membrane. It catalyses the reaction ATP + H2O + 4 H(+)(in) = ADP + phosphate + 5 H(+)(out). Produces ATP from ADP in the presence of a proton gradient across the membrane. The catalytic sites are hosted primarily by the beta subunits. This Mycoplasma capricolum subsp. capricolum (strain California kid / ATCC 27343 / NCTC 10154) protein is ATP synthase subunit beta.